Reading from the N-terminus, the 408-residue chain is LL-diaminopimelate aminotransferase (408 aa).

Residues tyrosine 15 and glycine 42 each coordinate substrate. Residues tyrosine 72, 108–109, tyrosine 132, asparagine 187, tyrosine 218, and 246–248 each bind pyridoxal 5'-phosphate; these read SK and SFS. Positions 109, 132, and 187 each coordinate substrate. Lysine 249 is modified (N6-(pyridoxal phosphate)lysine). Residues arginine 257 and asparagine 292 each coordinate pyridoxal 5'-phosphate. Residues asparagine 292 and arginine 388 each coordinate substrate.

It belongs to the class-I pyridoxal-phosphate-dependent aminotransferase family. LL-diaminopimelate aminotransferase subfamily. In terms of assembly, homodimer. It depends on pyridoxal 5'-phosphate as a cofactor.

The catalysed reaction is (2S,6S)-2,6-diaminopimelate + 2-oxoglutarate = (S)-2,3,4,5-tetrahydrodipicolinate + L-glutamate + H2O + H(+). Its pathway is amino-acid biosynthesis; L-lysine biosynthesis via DAP pathway; LL-2,6-diaminopimelate from (S)-tetrahydrodipicolinate (aminotransferase route): step 1/1. In terms of biological role, involved in the synthesis of meso-diaminopimelate (m-DAP or DL-DAP), required for both lysine and peptidoglycan biosynthesis. Catalyzes the direct conversion of tetrahydrodipicolinate to LL-diaminopimelate. The polypeptide is LL-diaminopimelate aminotransferase (Prochlorococcus marinus (strain MIT 9313)).